Here is a 309-residue protein sequence, read N- to C-terminus: Porphobilinogen deaminase (309 aa).

C241 is modified (S-(dipyrrolylmethanemethyl)cysteine).

It belongs to the HMBS family. As to quaternary structure, monomer. Dipyrromethane serves as cofactor.

It catalyses the reaction 4 porphobilinogen + H2O = hydroxymethylbilane + 4 NH4(+). It participates in porphyrin-containing compound metabolism; protoporphyrin-IX biosynthesis; coproporphyrinogen-III from 5-aminolevulinate: step 2/4. Tetrapolymerization of the monopyrrole PBG into the hydroxymethylbilane pre-uroporphyrinogen in several discrete steps. The polypeptide is Porphobilinogen deaminase (Desulforudis audaxviator (strain MP104C)).